Consider the following 759-residue polypeptide: Glycerol-3-phosphate O-acyltransferase 1 (759 aa).

The Lumenal portion of the chain corresponds to 1–48 (MPAPKLTEKFASSKSTQKTTNYSSIEAKSVKTSADQAYIYQEPSATKK). Residues 49–69 (ILYSIATWLLYNIFHCFFREI) traverse the membrane as a helical segment. Residues 70–434 (RGRGSFKVPQ…AKVNFAKNLG (365 aa)) are Cytoplasmic-facing. The HXXXXD motif motif lies at 414-419 (HYNLPD). Residues 435–449 (LVFFRSIGLCILFSL) traverse the membrane as a helical segment. Residue Ala-450 is a topological domain, lumenal. Residues 451-465 (MPGIIMFSPVFILAK) form a helical membrane-spanning segment. The Cytoplasmic segment spans residues 466–493 (RISQEKARTALSKSTVKIKANDVIATWK). The chain crosses the membrane as a helical span at residues 494–514 (ILIGMGFAPLLYIFWSVLITY). Residues 515–523 (YLRHKPWNK) are Lumenal-facing. A helical membrane pass occupies residues 524–544 (IYVFSGSYISCVIVTYSALIV). Over 545–759 (GDIGMDGFKS…EEEEGKEGDA (215 aa)) the chain is Cytoplasmic. 3 disordered regions span residues 613–667 (EEDR…SLVN), 684–705 (RKSE…EFEV), and 729–759 (IGEN…EGDA). Over residues 647 to 659 (RDNHDAYEHHNQD) the composition is skewed to basic and acidic residues. The segment covering 688–702 (SSLASTSVAPSSSSE) has biased composition (low complexity). The span at 736–759 (EEEEEEEEEEEEEEEEEEGKEGDA) shows a compositional bias: acidic residues.

Belongs to the GPAT/DAPAT family.

The protein resides in the endoplasmic reticulum membrane. It catalyses the reaction sn-glycerol 3-phosphate + an acyl-CoA = a 1-acyl-sn-glycero-3-phosphate + CoA. The enzyme catalyses dihydroxyacetone phosphate + an acyl-CoA = a 1-acylglycerone 3-phosphate + CoA. The catalysed reaction is sn-glycerol 3-phosphate + hexadecanoyl-CoA = 1-hexadecanoyl-sn-glycero-3-phosphate + CoA. It carries out the reaction (9Z)-hexadecenoyl-CoA + sn-glycerol 3-phosphate = 1-(9Z-hexadecenoyl)-sn-glycero-3-phosphate + CoA. It catalyses the reaction sn-glycerol 3-phosphate + octadecanoyl-CoA = 1-octadecanoyl-sn-glycero-3-phosphate + CoA. The enzyme catalyses sn-glycerol 3-phosphate + (9Z)-octadecenoyl-CoA = 1-(9Z-octadecenoyl)-sn-glycero-3-phosphate + CoA. It participates in phospholipid metabolism; CDP-diacylglycerol biosynthesis; CDP-diacylglycerol from sn-glycerol 3-phosphate: step 1/3. In terms of biological role, dual substrate-specific glycerol-3-phosphate/dihydroxyacetone phosphate sn-1 acyltransferase, catalyzing the first and committed reaction in the de novo synthesis of glycerophospholipids and triacylglycerols (TAGs). Prefers Gly-3-P over dihydroxyacetone phosphate and has a marked preference for 16-carbon fatty acyl chains. Transfers a fatty acid from fatty acyl-CoA to the sn-1 position of glycerol-3-phosphate to produce lysophosphatidic acid (LysoPA). These lipids not only are precursors of glycerolipids, but also are dynamic components of signal transduction systems that control cell physiology. SCT1 is the primary supplier of diacylglycerols (DAG), used mainly in TAG synthesis and phosphatidylcholine (PC) synthesis through the CDP-choline pathway. Regulates fatty acid desaturation, that is, the ratio of unsaturated versus saturated fatty acyl chains, by competing with the desaturase OLE1 for the common substrate C16:0-CoA. Sequesters C16:0-CoA into lipids, thereby shielding it from desaturation by OLE1. The polypeptide is Glycerol-3-phosphate O-acyltransferase 1 (Saccharomyces cerevisiae (strain ATCC 204508 / S288c) (Baker's yeast)).